The primary structure comprises 204 residues: Histone H3-like centromeric protein CSE4 (204 aa).

The segment at 68–107 (RVAEPAAAESRADGAREEERAARPARPRETRRIAKKPQRY) is disordered. Positions 77–99 (SRADGAREEERAARPARPRETRR) are enriched in basic and acidic residues. An H3-like region spans residues 89 to 202 (ARPARPRETR…MQLARRIRGQ (114 aa)).

This sequence belongs to the histone H3 family. As to quaternary structure, component of centromeric nucleosomes, where DNA is wrapped around a histone octamer core. The octamer contains two molecules each of H2A, H2B, CSE4/CENPA and H4 assembled in one CSE4-H4 heterotetramer and two H2A-H2B heterodimers. Interacts with the inner kinetochore. Post-translationally, ubiquitinated. Is degraded through ubiquitin-mediated proteolysis when not protected by its association to the kinetochore.

It is found in the nucleus. The protein localises to the chromosome. It localises to the centromere. Histone H3-like nucleosomal protein that is specifically found in centromeric nucleosomes. Replaces conventional H3 in the nucleosome core of centromeric chromatin that serves as an assembly site for the inner kinetochore. Required for recruitment and assembly of kinetochore proteins, mitotic progression and chromosome segregation. May serve as an epigenetic mark that propagates centromere identity through replication and cell division. The polypeptide is Histone H3-like centromeric protein CSE4 (CSE4) (Eremothecium gossypii (strain ATCC 10895 / CBS 109.51 / FGSC 9923 / NRRL Y-1056) (Yeast)).